The chain runs to 387 residues: Aminodeoxyfutalosine deaminase (387 aa).

A compositionally biased stretch (basic and acidic residues) spans 1–10 (MRPAYDDPRT). A disordered region spans residues 1-37 (MRPAYDDPRTTDQPITRARPPPRAARGRRLGEEPLTE). Residues His-61 and His-63 each coordinate Zn(2+). Arg-116, Asp-183, and Gly-217 together coordinate substrate. Position 244 (His-244) interacts with Zn(2+). Glu-247 serves as the catalytic Proton donor. Asp-325 serves as a coordination point for Zn(2+).

This sequence belongs to the metallo-dependent hydrolases superfamily. Adenosine and AMP deaminases family. It depends on Zn(2+) as a cofactor.

It carries out the reaction 6-amino-6-deoxyfutalosine + H2O + H(+) = futalosine + NH4(+). The protein operates within quinol/quinone metabolism; menaquinone biosynthesis. In terms of biological role, catalyzes the deamination of aminodeoxyfutalosine (AFL) into futalosine (FL), a step in the biosynthesis of menaquinone (MK, vitamin K2). This is Aminodeoxyfutalosine deaminase from Streptomyces coelicolor (strain ATCC BAA-471 / A3(2) / M145).